The following is a 348-amino-acid chain: Probable malate dehydrogenase 2, mitochondrial (348 aa).

A mitochondrion-targeting transit peptide spans 1–9 (MNKILTRSF). 31–37 (GASGQIG) is an NAD(+) binding site. Residues Arg112 and Arg118 each contribute to the substrate site. NAD(+) contacts are provided by residues Asn125, Gln132, and 150–152 (VGN). Substrate contacts are provided by Asn152 and Arg183. Residue His208 is the Proton acceptor of the active site.

The protein belongs to the LDH/MDH superfamily. MDH type 2 family. Homodimer.

The protein resides in the mitochondrion. It catalyses the reaction (S)-malate + NAD(+) = oxaloacetate + NADH + H(+). Functionally, catalyzes the reversible oxidation of malate to oxaloacetate. This Dictyostelium discoideum (Social amoeba) protein is Probable malate dehydrogenase 2, mitochondrial (mdhB).